Consider the following 232-residue polypeptide: Small ribosomal subunit protein uS3 (232 aa).

The region spanning V39–R107 is the KH type-2 domain. Residues A213–K232 form a disordered region.

It belongs to the universal ribosomal protein uS3 family. Part of the 30S ribosomal subunit. Forms a tight complex with proteins S10 and S14.

Its function is as follows. Binds the lower part of the 30S subunit head. Binds mRNA in the 70S ribosome, positioning it for translation. The sequence is that of Small ribosomal subunit protein uS3 from Vibrio parahaemolyticus serotype O3:K6 (strain RIMD 2210633).